A 686-amino-acid polypeptide reads, in one-letter code: Methionine--tRNA ligase (686 aa).

The short motif at 15-25 (PYANGPIHLGH) is the 'HIGH' region element. Positions 146, 149, 159, and 162 each coordinate Zn(2+). Residues 331 to 335 (KMSKS) carry the 'KMSKS' region motif. K334 is an ATP binding site. The tRNA-binding domain occupies 584-686 (DFAKIDLRVA…AGVKAGSRVM (103 aa)).

The protein belongs to the class-I aminoacyl-tRNA synthetase family. MetG type 1 subfamily. As to quaternary structure, homodimer. It depends on Zn(2+) as a cofactor.

The protein resides in the cytoplasm. The enzyme catalyses tRNA(Met) + L-methionine + ATP = L-methionyl-tRNA(Met) + AMP + diphosphate. In terms of biological role, is required not only for elongation of protein synthesis but also for the initiation of all mRNA translation through initiator tRNA(fMet) aminoacylation. The chain is Methionine--tRNA ligase from Mannheimia succiniciproducens (strain KCTC 0769BP / MBEL55E).